We begin with the raw amino-acid sequence, 435 residues long: MTTWTAPLAPQPVHATVTVPGSKSQTNRALVLAALAAAQGRGTPTLSGALRSRDTDLMIGALRTLGLRVDGTGPELTVSGHIAPGPHARVDCGLAGTVLRFVPPLAALADAVVEFDGDEQARARPIAPLLDALRGLGVRIEGTALPFRVHGSGALAGGTVAIDASASSQFVSGLLLCAASFTEGLTVQHTGAALPSAPHIAMTVAMLRQAGVDVDDSVPNRWQVRPGPVAARHWEVEPDLTNAVPFLAAAVVSGGTVRITGWPADSVQPADNILSVLGKLNAVVSQTDSSLEVRGSGSYDGFDVDLRAVGELTPSVAALAALATPGSVSRLSGIAHLRGHETDRLAALSAEINRLGGDCTETPDGLVITATPLRPGVWHAYADHRMAMAGAIVGLRVAGVRVDDIGATSKTLPDFPRLWARMLDASLPDGEEHGM.

3-phosphoshikimate contacts are provided by Lys-23, Ser-24, and Arg-28. Residue Lys-23 coordinates phosphoenolpyruvate. Phosphoenolpyruvate is bound by residues Gly-96 and Arg-124. Ser-167, Ser-168, Gln-169, Ser-196, Glu-311, and His-340 together coordinate 3-phosphoshikimate. Gln-169 contributes to the phosphoenolpyruvate binding site. The active-site Proton acceptor is Glu-311. Residues Arg-344, Arg-385, and Lys-410 each coordinate phosphoenolpyruvate.

It belongs to the EPSP synthase family. As to quaternary structure, monomer.

It localises to the cytoplasm. It carries out the reaction 3-phosphoshikimate + phosphoenolpyruvate = 5-O-(1-carboxyvinyl)-3-phosphoshikimate + phosphate. Its pathway is metabolic intermediate biosynthesis; chorismate biosynthesis; chorismate from D-erythrose 4-phosphate and phosphoenolpyruvate: step 6/7. Functionally, catalyzes the transfer of the enolpyruvyl moiety of phosphoenolpyruvate (PEP) to the 5-hydroxyl of shikimate-3-phosphate (S3P) to produce enolpyruvyl shikimate-3-phosphate and inorganic phosphate. This chain is 3-phosphoshikimate 1-carboxyvinyltransferase, found in Mycolicibacterium paratuberculosis (strain ATCC BAA-968 / K-10) (Mycobacterium paratuberculosis).